A 622-amino-acid chain; its full sequence is Histone-arginine methyltransferase CARMER (622 aa).

Residues alanine 118–aspartate 425 form the SAM-dependent MTase PRMT-type domain. S-adenosyl-L-methionine is bound by residues glutamine 131, arginine 140, glycine 164, glutamate 186, glutamate 215, and threonine 243. At arginine 478 the chain carries Asymmetric dimethylarginine; by autocatalysis. Disordered regions lie at residues alanine 513–glutamine 556 and glutamine 602–tyrosine 622. Over residues glutamine 536–glutamine 556 the composition is skewed to low complexity.

This sequence belongs to the class I-like SAM-binding methyltransferase superfamily. Protein arginine N-methyltransferase family. Homodimer. In terms of processing, the dimethylated protein is the major form.

It is found in the cytoplasm. The protein resides in the nucleus. It catalyses the reaction L-arginyl-[protein] + 2 S-adenosyl-L-methionine = N(omega),N(omega)-dimethyl-L-arginyl-[protein] + 2 S-adenosyl-L-homocysteine + 2 H(+). Methylates (mono- and asymmetric dimethylation) the guanidino nitrogens of arginyl residues in proteins. May methylate histone H3 at 'Arg-17' and activate transcription via chromatin remodeling. This chain is Histone-arginine methyltransferase CARMER, found in Anopheles gambiae (African malaria mosquito).